Here is a 211-residue protein sequence, read N- to C-terminus: Large ribosomal subunit protein uL3 (211 aa).

The tract at residues 122–157 is disordered; sequence NQKRNNFGRGPMSHGSKNHRAPGSIGAGTTPGRVYP.

The protein belongs to the universal ribosomal protein uL3 family. In terms of assembly, part of the 50S ribosomal subunit. Forms a cluster with proteins L14 and L19.

Functionally, one of the primary rRNA binding proteins, it binds directly near the 3'-end of the 23S rRNA, where it nucleates assembly of the 50S subunit. The sequence is that of Large ribosomal subunit protein uL3 from Trichormus variabilis (strain ATCC 29413 / PCC 7937) (Anabaena variabilis).